A 552-amino-acid chain; its full sequence is CTP synthase (552 aa).

The interval 1–267 (MSKFVFVTGG…AHQTLELLRM (267 aa)) is amidoligase domain. Serine 13 contacts CTP. Serine 13 lines the UTP pocket. ATP-binding positions include 14 to 19 (SIGKGI) and aspartate 71. Residues aspartate 71 and glutamate 141 each coordinate Mg(2+). CTP is bound by residues 148–150 (DIE), 188–193 (KTKPTQ), and lysine 224. Residues 188-193 (KTKPTQ) and lysine 224 contribute to the UTP site. A Glutamine amidotransferase type-1 domain is found at 292 to 534 (TVALVGKYVQ…INAVLKRRNA (243 aa)). Glycine 354 contributes to the L-glutamine binding site. Catalysis depends on cysteine 381, which acts as the Nucleophile; for glutamine hydrolysis. L-glutamine contacts are provided by residues 382–385 (LGMQ), glutamate 405, and arginine 462. Active-site residues include histidine 507 and glutamate 509.

Belongs to the CTP synthase family. Homotetramer.

It carries out the reaction UTP + L-glutamine + ATP + H2O = CTP + L-glutamate + ADP + phosphate + 2 H(+). The catalysed reaction is L-glutamine + H2O = L-glutamate + NH4(+). It catalyses the reaction UTP + NH4(+) + ATP = CTP + ADP + phosphate + 2 H(+). Its pathway is pyrimidine metabolism; CTP biosynthesis via de novo pathway; CTP from UDP: step 2/2. With respect to regulation, allosterically activated by GTP, when glutamine is the substrate; GTP has no effect on the reaction when ammonia is the substrate. The allosteric effector GTP functions by stabilizing the protein conformation that binds the tetrahedral intermediate(s) formed during glutamine hydrolysis. Inhibited by the product CTP, via allosteric rather than competitive inhibition. Catalyzes the ATP-dependent amination of UTP to CTP with either L-glutamine or ammonia as the source of nitrogen. Regulates intracellular CTP levels through interactions with the four ribonucleotide triphosphates. The sequence is that of CTP synthase from Synechocystis sp. (strain ATCC 27184 / PCC 6803 / Kazusa).